A 609-amino-acid polypeptide reads, in one-letter code: MTCLDELAHSLESKSDTTNFKTRNSKIKTIDLYQQNELSGKHPQDQDKFYRLPAIDPIARDKKPWKEDINYFNKCYISSLALMKMCTHAQTGGSIEIMGMLVGKISGHSIIVMDTYRLPVEGTETRVNAQNEAYTYMVEYLTERQQLSNGKNEENIVGWYHSHPGYGCWLSGIDVSTQSLNQGFQDPYLAIVVDPVKTLKQGKVEIGAFRTYPEGSQQQPSMTNKTRKDQNKPHNSGANANRKILPKSKQKDFGSHADKYYSLDIEIFTSSWDDKVIEMLKDEDSLTWMKNLLVDSNNNDKILGIRKDEIRSIELIKNYELISQGNHNADEGETIFDLIEQLKIQANTPKFMLDKLTTMKFDSTFESVLYKRLLKKTQKSTTTKKNRKDLSTDIDDETMLDESDLEKNVGTGGIETSISSDDDDEEEEGEGEGNSSSRRDNNNNEVEEGPTDEVDSEYANEELLEEVGALENYNFNDLLENKSANKFLRSEQKIKHKNRPIHQRMDNSSMISEWNRLGHQQQHMPADYPYQWSSNVANLVKTSKTNRRRERLHRLQGASIDNKKQFELGLHGSPESKAKSANLVKLAKSIGLNEVFDLITLDAQQKLFG.

Residues 75-215 (CYISSLALMK…IGAFRTYPEG (141 aa)) form the MPN domain. His-161, His-163, and Asp-174 together coordinate Zn(2+). A JAMM motif motif is present at residues 161–174 (HSHPGYGCWLSGID). 2 disordered regions span residues 210 to 248 (RTYPEGSQQQPSMTNKTRKDQNKPHNSGANANRKILPKS) and 381 to 456 (TTTK…EVDS). A compositionally biased stretch (polar residues) spans 214-224 (EGSQQQPSMTN). 3 stretches are compositionally biased toward acidic residues: residues 392-404 (TDIDDETMLDESD), 420-431 (SDDDDEEEEGEG), and 445-456 (EVEEGPTDEVDS).

It belongs to the peptidase M67A family. CSN5 subfamily. Component of the COP9 signalosome (CSN) complex.

The protein resides in the cytoplasm. It is found in the nucleus. Its function is as follows. Catalytic Component of the COP9 signalosome (CSN) complex that acts as an regulator of the ubiquitin (Ubl) conjugation pathway by mediating the deneddylation of the cullin subunit of SCF-type E3 ubiquitin-protein ligase complexes. This chain is COP9 signalosome complex subunit 5 (JAB1), found in Candida albicans (strain SC5314 / ATCC MYA-2876) (Yeast).